The following is a 218-amino-acid chain: Tubulin polymerization-promoting protein (218 aa).

The disordered stretch occupies residues 1-45 (MADSKAKPTKAANKTPPKSPGDPAKAAKRLSLESEGANEGAAAAP). The mediates interaction with LIMK1 stretch occupies residues 2–115 (ADSKAKPTKA…SCRTITFEQF (114 aa)). Threonine 15 carries the post-translational modification Phosphothreonine. 3 positions are modified to phosphoserine: serine 19, serine 31, and serine 34. Residues 33–45 (ESEGANEGAAAAP) show a composition bias toward low complexity. 4 residues coordinate Zn(2+): histidine 60, histidine 71, cysteine 79, and cysteine 82. Residue threonine 91 is modified to Phosphothreonine. Serine 106 carries the phosphoserine modification. Serine 151 is a glycosylation site (O-linked (GlcNAc) serine). Residues serine 158 and serine 159 each carry the phosphoserine modification. The segment at 165 to 192 (LTDTSKFTGSHKERFDQSGKGKGKAGRV) is disordered. A compositionally biased stretch (basic and acidic residues) spans 174-183 (SHKERFDQSG).

This sequence belongs to the TPPP family. In terms of assembly, homodimer. Binds tubulin; binding is inhibited by GTP. Interacts with MAPK1. Interacts with GAPDH; the interaction is direct. Interacts with LIMK1 (via the PDZ domain); the interaction is direct. Interacts with LIMK2. Interacts with HDAC6; thereby inhibiting the tubulin deacetylase activity of HDAC6. Interacts with aggregated SNCA; may have a pro-aggregatory role in synucleinopathies. Interacts with DYNLL1. Interacts (via C-terminus) with S100A2, S100A6 and S100B; these interactions inhibit TPPP dimerization. Mg(2+) is required as a cofactor. Post-translationally, phosphorylated by LIMK1 on serine residues; phosphorylation may alter the tubulin polymerization activity. Phosphorylation by LIMK2, but not LIMK1, regulates astral microtubule organization at early stage of mitosis. Phosphorylation by ROCK1 at Ser-31, Ser-106 and Ser-158 inhibits interaction with HDAC6, resulting in decreased acetylation of tubulin, increased cell motility and entry into S-phase. Phosphorylation by CDK1 inhibits the microtubule polymerizing activity. Degraded by the proteasome; zinc-binding inhibits degradation by the proteasome. In terms of tissue distribution, predominantly expressed in mature oligodendrocytes.

The protein resides in the golgi outpost. It localises to the cytoplasm. Its subcellular location is the cytoskeleton. It is found in the microtubule organizing center. The protein localises to the nucleus. The protein resides in the spindle. It catalyses the reaction GTP + H2O = GDP + phosphate + H(+). Functionally, regulator of microtubule dynamics that plays a key role in myelination by promoting elongation of the myelin sheath. Acts as a microtubule nucleation factor in oligodendrocytes: specifically localizes to the postsynaptic Golgi apparatus region, also named Golgi outpost, and promotes microtubule nucleation, an important step for elongation of the myelin sheath. Required for both uniform polarized growth of distal microtubules as well as directing the branching of proximal processes. Shows magnesium-dependent GTPase activity; the role of the GTPase activity is unclear. In addition to microtubule nucleation activity, also involved in microtubule bundling and stabilization of existing microtubules, thereby maintaining the integrity of the microtubule network. Regulates microtubule dynamics by promoting tubulin acetylation: acts by inhibiting the tubulin deacetylase activity of HDAC6. Also regulates cell migration: phosphorylation by ROCK1 inhibits interaction with HDAC6, resulting in decreased acetylation of tubulin and increased cell motility. Plays a role in cell proliferation by regulating the G1/S-phase transition. Involved in astral microtubule organization and mitotic spindle orientation during early stage of mitosis; this process is regulated by phosphorylation by LIMK2. The protein is Tubulin polymerization-promoting protein of Rattus norvegicus (Rat).